The sequence spans 396 residues: Penicillopepsin-1 (396 aa).

The first 20 residues, methionine 1–alanine 20, serve as a signal peptide directing secretion. Positions alanine 21–alanine 72 are cleaved as a propeptide — activation peptide. In terms of domain architecture, Peptidase A1 spans tyrosine 88–alanine 393. Residues aspartate 104 and aspartate 285 contribute to the active site. An N-linked (GlcNAc...) asparagine glycan is attached at asparagine 311. The cysteines at positions 321 and 356 are disulfide-linked.

It belongs to the peptidase A1 family. Monomer.

It localises to the secreted. It carries out the reaction Hydrolysis of proteins with broad specificity similar to that of pepsin A, preferring hydrophobic residues at P1 and P1', but also cleaving 20-Gly-|-Glu-21 in the B chain of insulin. Clots milk, and activates trypsinogen.. Secreted aspartic endopeptidase that allows assimilation of proteinaceous substrates. The scissile peptide bond is attacked by a nucleophilic water molecule activated by two aspartic residues in the active site. Shows a broad primary substrate specificity. Favors hydrophobic residues at the P1 and P1' positions, but can also activate trypsinogen and hydrolyze the B chain of insulin between positions 'Gly-20' and 'Glu-21'. In Penicillium rubens (strain ATCC 28089 / DSM 1075 / NRRL 1951 / Wisconsin 54-1255) (Penicillium chrysogenum), this protein is Penicillopepsin-1 (pepA).